A 117-amino-acid chain; its full sequence is uncharacterized protein (117 aa).

It localises to the cytoplasm. It is found in the nucleus. This is an uncharacterized protein from Saccharomyces cerevisiae (strain ATCC 204508 / S288c) (Baker's yeast).